A 285-amino-acid chain; its full sequence is Homeobox protein Hox-A4 (285 aa).

Disordered regions lie at residues 19–70 (PFEE…APRA) and 94–130 (ASPG…TTPA). The segment covering 27–41 (GGPGGGDGAVGGGPG) has biased composition (gly residues). Positions 44–70 (RPQSAPHLPAPNPHAARQPPAYYAPRA) are enriched in low complexity. Residues 106 to 118 (GAHPSPAPQPPVP) are compositionally biased toward pro residues. Residues 159-164 (VYPWMK) carry the Antp-type hexapeptide motif. Residues 180–239 (PKRSRTAYTRQQVLELEKEFHFNRYLTRRRRIEIAHTLCLSERQVKIWFQNRRMKWKKDH) constitute a DNA-binding region (homeobox). The interval 238–285 (DHKLPNTKMRSSNTASAPAGPPGKAQTHSPHHHPHPLPGASTPIPSSI) is disordered.

This sequence belongs to the Antp homeobox family. Deformed subfamily.

It is found in the nucleus. In terms of biological role, sequence-specific transcription factor which is part of a developmental regulatory system that provides cells with specific positional identities on the anterior-posterior axis. Binds to sites in the 5'-flanking sequence of its coding region with various affinities. The consensus sequences of the high and low affinity binding sites are 5'-TAATGA[CG]-3' and 5'-CTAATTTT-3'. The chain is Homeobox protein Hox-A4 (Hoxa4) from Mus musculus (Mouse).